The primary structure comprises 307 residues: Methionyl-tRNA formyltransferase (307 aa).

A (6S)-5,6,7,8-tetrahydrofolate-binding site is contributed by 108–111 (SLLP).

Belongs to the Fmt family.

It catalyses the reaction L-methionyl-tRNA(fMet) + (6R)-10-formyltetrahydrofolate = N-formyl-L-methionyl-tRNA(fMet) + (6S)-5,6,7,8-tetrahydrofolate + H(+). Functionally, attaches a formyl group to the free amino group of methionyl-tRNA(fMet). The formyl group appears to play a dual role in the initiator identity of N-formylmethionyl-tRNA by promoting its recognition by IF2 and preventing the misappropriation of this tRNA by the elongation apparatus. The polypeptide is Methionyl-tRNA formyltransferase (Xanthomonas euvesicatoria pv. vesicatoria (strain 85-10) (Xanthomonas campestris pv. vesicatoria)).